Consider the following 395-residue polypeptide: Axin-like protein 1 (395 aa).

The 129-residue stretch at arginine 4–tryptophan 132 folds into the RGS domain. The tract at residues glutamine 190–asparagine 230 is disordered. A compositionally biased stretch (basic and acidic residues) spans asparagine 194–alanine 208. The DIX domain maps to glutamate 301–proline 386.

As to quaternary structure, interacts with bar-1, dsh-2, gsk-3, and mig-5.

Works in parallel with pry-1 in negatively regulating bar-1 signaling in vulval precursor cells and Q neuroblasts. Shown to have a role in excretory cell development. The chain is Axin-like protein 1 (axl-1) from Caenorhabditis briggsae.